The primary structure comprises 220 residues: CRIB domain-containing protein RIC3 (220 aa).

Positions Ile-28–Gly-41 constitute a CRIB domain. Positions His-39 to Glu-220 are disordered. Residues Asn-61 to Ile-77 show a composition bias toward polar residues. Low complexity predominate over residues Asn-108–Ser-121. Composition is skewed to basic residues over residues Asn-127 to His-136 and His-172 to Lys-184. Positions Asp-209–Glu-220 are enriched in polar residues.

As to quaternary structure, interacts with ARAC11/ROP1. In terms of tissue distribution, expressed in flowers and pollen.

It localises to the cytoplasm. Functionally, functions as a downstream effector of Rho-related GTP binding proteins of the 'Rho of Plants' (ROPs) family. Participates in the propagation of ROP GTPase signals in specific cellular responses. Functions as a downstream effector of ARAC11/ROP1 to activate calcium signaling that leads to F-actin disassembly associated with exocytosis in the tip of the growing pollen tube. Counteracts the ARAC11/ROP1-RIC4 pathway, which promotes apical F-actin assembly associated with vesicle accumulation, to control actin dynamics and pollen tube apical growth. The polypeptide is CRIB domain-containing protein RIC3 (RIC3) (Arabidopsis thaliana (Mouse-ear cress)).